Here is a 305-residue protein sequence, read N- to C-terminus: Sulfate adenylyltransferase subunit 2 (305 aa).

The protein belongs to the PAPS reductase family. CysD subfamily. Heterodimer composed of CysD, the smaller subunit, and CysN.

It catalyses the reaction sulfate + ATP + H(+) = adenosine 5'-phosphosulfate + diphosphate. Its pathway is sulfur metabolism; hydrogen sulfide biosynthesis; sulfite from sulfate: step 1/3. With CysN forms the ATP sulfurylase (ATPS) that catalyzes the adenylation of sulfate producing adenosine 5'-phosphosulfate (APS) and diphosphate, the first enzymatic step in sulfur assimilation pathway. APS synthesis involves the formation of a high-energy phosphoric-sulfuric acid anhydride bond driven by GTP hydrolysis by CysN coupled to ATP hydrolysis by CysD. In Ectopseudomonas mendocina (strain ymp) (Pseudomonas mendocina), this protein is Sulfate adenylyltransferase subunit 2.